The chain runs to 67 residues: Alpha-toxin Bu1 (67 aa).

The LCN-type CS-alpha/beta domain occupies 3 to 65 (RDAYIADDKN…VPIRIPGRCR (63 aa)). Cystine bridges form between C13-C64, C17-C37, C23-C47, and C27-C49. An Arginine amide modification is found at R65.

It belongs to the long (4 C-C) scorpion toxin superfamily. Sodium channel inhibitor family. Alpha subfamily. Expressed by the venom gland.

The protein resides in the secreted. Functionally, alpha toxins bind voltage-independently at site-3 of sodium channels (Nav) and inhibit the inactivation of the activated channels, thereby blocking neuronal transmission. Since the experiments have been done on F11 cells (immortalized cell line derived from rat DRG neurons mainly expressing Nav1.3/SCN3A, but also Nav1.7/SCN9A and Nav1.2/SCN2A), it is supposed to act on these channels. The slow of inactivation process is partially reversible. Is lethal to mice. This chain is Alpha-toxin Bu1, found in Buthacus macrocentrus (Turkish scorpion).